A 146-amino-acid chain; its full sequence is Vascular endothelial growth factor A (146 aa).

Positions 1-26 (MNFLLSWVHWSLALLLYLHHAKWSQA) are cleaved as a signal peptide. 3 disulfides stabilise this stretch: cysteine 51/cysteine 93, cysteine 82/cysteine 127, and cysteine 86/cysteine 129. N-linked (GlcNAc...) asparagine glycosylation is present at asparagine 100.

Belongs to the PDGF/VEGF growth factor family. Homodimer; disulfide-linked. Also found as heterodimer with PGF. Interacts with NRP1. Interacts with isoform 2 of BSG. Interacts with CD82; this interaction inhibits VEGFA-mediated signaling pathway.

In terms of biological role, growth factor active in angiogenesis, vasculogenesis and endothelial cell growth. Induces endothelial cell proliferation, promotes cell migration, inhibits apoptosis and induces permeabilization of blood vessels. Binds to the FLT1/VEGFR1 and KDR/VEGFR2 receptors, heparan sulfate and heparin. Binding to NRP1 receptor initiates a signaling pathway needed for motor neuron axon guidance and cell body migration, including for the caudal migration of facial motor neurons from rhombomere 4 to rhombomere 6 during embryonic development. Also binds the DEAR/FBXW7-AS1 receptor. This Ovis aries (Sheep) protein is Vascular endothelial growth factor A (VEGFA).